Consider the following 184-residue polypeptide: Oligoribonuclease (184 aa).

One can recognise an Exonuclease domain in the interval 10–172 (LVWVDCEMTG…ADVLESIAEL (163 aa)). Tyr129 is an active-site residue.

This sequence belongs to the oligoribonuclease family.

Its subcellular location is the cytoplasm. Its function is as follows. 3'-to-5' exoribonuclease specific for small oligoribonucleotides. The chain is Oligoribonuclease from Tropheryma whipplei (strain Twist) (Whipple's bacillus).